A 215-amino-acid polypeptide reads, in one-letter code: Ribose-5-phosphate isomerase A (215 aa).

Substrate-binding positions include 26 to 29 (TGST), 79 to 82 (DGAD), and 92 to 95 (KGGG). Glu101 (proton acceptor) is an active-site residue. Lys119 serves as a coordination point for substrate.

Belongs to the ribose 5-phosphate isomerase family. In terms of assembly, homodimer.

It catalyses the reaction aldehydo-D-ribose 5-phosphate = D-ribulose 5-phosphate. It participates in carbohydrate degradation; pentose phosphate pathway; D-ribose 5-phosphate from D-ribulose 5-phosphate (non-oxidative stage): step 1/1. Catalyzes the reversible conversion of ribose-5-phosphate to ribulose 5-phosphate. The sequence is that of Ribose-5-phosphate isomerase A from Xylella fastidiosa (strain M12).